Reading from the N-terminus, the 485-residue chain is UDP-N-acetylmuramoyl-L-alanyl-D-glutamate--2,6-diaminopimelate ligase (485 aa).

Ser-28 lines the UDP-N-acetyl-alpha-D-muramoyl-L-alanyl-D-glutamate pocket. 108-114 (GTNGKTS) provides a ligand contact to ATP. Residues Asn-147, 148 to 149 (TT), Ser-175, and Arg-183 each bind UDP-N-acetyl-alpha-D-muramoyl-L-alanyl-D-glutamate. Lys-215 bears the N6-carboxylysine mark. Residues Arg-374, 398 to 401 (DNPR), Gly-449, and Glu-453 contribute to the meso-2,6-diaminopimelate site. The short motif at 398–401 (DNPR) is the Meso-diaminopimelate recognition motif element.

Belongs to the MurCDEF family. MurE subfamily. Mg(2+) is required as a cofactor. Carboxylation is probably crucial for Mg(2+) binding and, consequently, for the gamma-phosphate positioning of ATP.

The protein localises to the cytoplasm. The enzyme catalyses UDP-N-acetyl-alpha-D-muramoyl-L-alanyl-D-glutamate + meso-2,6-diaminopimelate + ATP = UDP-N-acetyl-alpha-D-muramoyl-L-alanyl-gamma-D-glutamyl-meso-2,6-diaminopimelate + ADP + phosphate + H(+). The protein operates within cell wall biogenesis; peptidoglycan biosynthesis. Its function is as follows. Catalyzes the addition of meso-diaminopimelic acid to the nucleotide precursor UDP-N-acetylmuramoyl-L-alanyl-D-glutamate (UMAG) in the biosynthesis of bacterial cell-wall peptidoglycan. The polypeptide is UDP-N-acetylmuramoyl-L-alanyl-D-glutamate--2,6-diaminopimelate ligase (Fusobacterium nucleatum subsp. nucleatum (strain ATCC 25586 / DSM 15643 / BCRC 10681 / CIP 101130 / JCM 8532 / KCTC 2640 / LMG 13131 / VPI 4355)).